A 190-amino-acid polypeptide reads, in one-letter code: Protein shisa-like-2A (190 aa).

Helical transmembrane passes span 48–68 and 70–90; these read SFFP…LIGL and VAAV…YLFI.

Belongs to the shisa family.

It localises to the membrane. The chain is Protein shisa-like-2A from Homo sapiens (Human).